The sequence spans 243 residues: 7-cyano-7-deazaguanine synthase (243 aa).

18–28 (FSGGQDSATCL) is a binding site for ATP. Residues cysteine 206, cysteine 221, cysteine 224, and cysteine 227 each coordinate Zn(2+).

It belongs to the QueC family. The cofactor is Zn(2+).

The catalysed reaction is 7-carboxy-7-deazaguanine + NH4(+) + ATP = 7-cyano-7-deazaguanine + ADP + phosphate + H2O + H(+). It participates in purine metabolism; 7-cyano-7-deazaguanine biosynthesis. Its function is as follows. Catalyzes the ATP-dependent conversion of 7-carboxy-7-deazaguanine (CDG) to 7-cyano-7-deazaguanine (preQ(0)). The polypeptide is 7-cyano-7-deazaguanine synthase (Maricaulis maris (strain MCS10) (Caulobacter maris)).